The sequence spans 498 residues: Aspartyl/glutamyl-tRNA(Asn/Gln) amidotransferase subunit B (498 aa).

The protein belongs to the GatB/GatE family. GatB subfamily. As to quaternary structure, heterotrimer of A, B and C subunits.

It carries out the reaction L-glutamyl-tRNA(Gln) + L-glutamine + ATP + H2O = L-glutaminyl-tRNA(Gln) + L-glutamate + ADP + phosphate + H(+). The enzyme catalyses L-aspartyl-tRNA(Asn) + L-glutamine + ATP + H2O = L-asparaginyl-tRNA(Asn) + L-glutamate + ADP + phosphate + 2 H(+). In terms of biological role, allows the formation of correctly charged Asn-tRNA(Asn) or Gln-tRNA(Gln) through the transamidation of misacylated Asp-tRNA(Asn) or Glu-tRNA(Gln) in organisms which lack either or both of asparaginyl-tRNA or glutaminyl-tRNA synthetases. The reaction takes place in the presence of glutamine and ATP through an activated phospho-Asp-tRNA(Asn) or phospho-Glu-tRNA(Gln). This is Aspartyl/glutamyl-tRNA(Asn/Gln) amidotransferase subunit B from Caulobacter vibrioides (strain ATCC 19089 / CIP 103742 / CB 15) (Caulobacter crescentus).